The chain runs to 467 residues: MGRRAPRGSPEAAPGADVAPGARAAWWVWCVQVATFIVSAICVVGLLVLASVFRDRFPCLYAPATSYAKANATVEVRGGVAVPLRLDTQSLLATYAITSTLLLAAAVYAAVGAVTSRYERALDAARRLAAARMAMPHATLIAGNVCAWLLQITVLLLAHRISQLAHLIYVLHFACLVYLAAHFCTRGVLSGTYLRQVHGLIDPAPTHHRIVGPVRAVMTNALLLGTLLCTAAAAVSLNTIAALNFNFSAPSMLICLTTLFALLVVSLLLVVEGVLCHYVRVLVGPHLGAIAATGIVGLACEHYHTGGYYVVEQQWPGAQTGVRVALALVAAFALAMAVLRCTRAYLYHRRHHTKFFVRMRDTRHRAHSALRRVRSSMRGSRRGGPPGDPGYAETPYASVSHHAEIDRYGDSDGDPIYDEVAPDHEAELYARVQRPGPVPDAEPIYDTVEGYAPRSAGEPVYSTVRRW.

At 1-32 (MGRRAPRGSPEAAPGADVAPGARAAWWVWCVQ) the chain is on the intravirion side. Residues 33 to 53 (VATFIVSAICVVGLLVLASVF) form a helical membrane-spanning segment. Over 54 to 90 (RDRFPCLYAPATSYAKANATVEVRGGVAVPLRLDTQS) the chain is Virion surface. A helical transmembrane segment spans residues 91 to 111 (LLATYAITSTLLLAAAVYAAV). Topologically, residues 112–137 (GAVTSRYERALDAARRLAAARMAMPH) are intravirion. The chain crosses the membrane as a helical span at residues 138–158 (ATLIAGNVCAWLLQITVLLLA). Over 159 to 163 (HRISQ) the chain is Virion surface. The helical transmembrane segment at 164 to 184 (LAHLIYVLHFACLVYLAAHFC) threads the bilayer. Residues 185–220 (TRGVLSGTYLRQVHGLIDPAPTHHRIVGPVRAVMTN) lie on the Intravirion side of the membrane. The helical transmembrane segment at 221–241 (ALLLGTLLCTAAAAVSLNTIA) threads the bilayer. The Virion surface portion of the chain corresponds to 242-250 (ALNFNFSAP). The chain crosses the membrane as a helical span at residues 251 to 271 (SMLICLTTLFALLVVSLLLVV). Over 272–280 (EGVLCHYVR) the chain is Intravirion. The chain crosses the membrane as a helical span at residues 281–301 (VLVGPHLGAIAATGIVGLACE). Over 302–318 (HYHTGGYYVVEQQWPGA) the chain is Virion surface. A helical membrane pass occupies residues 319-339 (QTGVRVALALVAAFALAMAVL). The Intravirion segment spans residues 340-467 (RCTRAYLYHR…EPVYSTVRRW (128 aa)). Positions 371–381 (RRVRSSMRGSR) are enriched in basic residues. Disordered stretches follow at residues 371 to 395 (RRVRSSMRGSRRGGPPGDPGYAETP) and 432 to 459 (VQRPGPVPDAEPIYDTVEGYAPRSAGEP).

The protein belongs to the herpesviridae glycoprotein M family. In terms of assembly, interacts (via N-terminus) with gN (via N-terminus). The gM-gN heterodimer forms the gCII complex.

It localises to the virion membrane. The protein resides in the host Golgi apparatus. The protein localises to the host trans-Golgi network. Its subcellular location is the host endosome membrane. It is found in the host nucleus inner membrane. Its function is as follows. Envelope glycoprotein important for virion assembly and egress. Plays a role in the correct incorporation of gH-gL into virion membrane. Directs the glycoprotein N (gN) to the host trans-Golgi network. The chain is Envelope glycoprotein M from Human herpesvirus 2 (strain HG52) (HHV-2).